A 440-amino-acid chain; its full sequence is Discs overgrown protein kinase (440 aa).

The Protein kinase domain maps to 9-277 (YRLGRKIGSG…HLRKLFRNLF (269 aa)). ATP is bound by residues 15–23 (IGSGSFGDI) and Lys-38. Asp-128 acts as the Proton acceptor in catalysis. Residues 221–224 (KRQK) form a nuclear localization signal; essential for interaction with Bdbt and important for nuclear localization region. A phosphoserine mark is found at Ser-333 and Ser-334. The segment at 376–440 (SQLIGGNGLN…GGGGGVGNAK (65 aa)) is disordered. Positions 413-440 (QGGGGGGGGVGVGGMPSGGGGGGVGNAK) are enriched in gly residues.

Belongs to the protein kinase superfamily. CK1 Ser/Thr protein kinase family. Casein kinase I subfamily. As to quaternary structure, forms a complex with per. Interacts with Dlish. Interacts (via nuclear localization signal) with Bdbt. In terms of tissue distribution, detected in the head (at protein level). Expressed in photoreceptor cells of the eyes as well as in the region situated between the optic lobe and the central brain.

It localises to the nucleus. It is found in the cytoplasm. Its subcellular location is the cytosol. It carries out the reaction L-seryl-[protein] + ATP = O-phospho-L-seryl-[protein] + ADP + H(+). It catalyses the reaction L-threonyl-[protein] + ATP = O-phospho-L-threonyl-[protein] + ADP + H(+). In terms of biological role, serine/threonine-protein kinase which is involved in the circadian rhythm pathway, viability and planar cell polarity. In the circadian rhythm pathway, phosphorylates the clock gene period (per) and targets it for degradation in the absence of timeless (tim), thus contributing to production of the circadian oscillations of the clock genes. Together with CkIalpha, regulates processing of ci by phosphorylating it, which promotes its binding to slmb, the F-box recognition component of the SCF(slmb) E3 ubiquitin-protein ligase. Involved in the inhibition of apoptosis during cell proliferation and growth arrest in imaginal disks. Also functions in planar cell polarity. The chain is Discs overgrown protein kinase (dco) from Drosophila melanogaster (Fruit fly).